The following is a 350-amino-acid chain: Probable V-type proton ATPase subunit d 2 (350 aa).

This sequence belongs to the V-ATPase V0D/AC39 subunit family. V-ATPase is a heteromultimeric enzyme made up of two complexes: the ATP-hydrolytic V1 complex and the proton translocation V0 complex. The V1 complex consists of three catalytic AB heterodimers that form a heterohexamer, three peripheral stalks each consisting of EG heterodimers, one central rotor including subunits D and F, and the regulatory subunits C and H. The proton translocation complex V0 consists of the proton transport subunit a, a ring of proteolipid subunits c9c'', rotary subunit d, subunits e and f, and the accessory subunits VhaAC45 and ATP6AP2.

Its function is as follows. Subunit of the V0 complex of vacuolar(H+)-ATPase (V-ATPase), a multisubunit enzyme composed of a peripheral complex (V1) that hydrolyzes ATP and a membrane integral complex (V0) that translocates protons. V-ATPase is responsible for acidifying and maintaining the pH of intracellular compartments and in some cell types, is targeted to the plasma membrane, where it is responsible for acidifying the extracellular environment. May play a role in coupling of proton transport and ATP hydrolysis. The chain is Probable V-type proton ATPase subunit d 2 (VhaAC39-2) from Drosophila melanogaster (Fruit fly).